The primary structure comprises 416 residues: Trifolitoxin-processing protein TfxD (416 aa).

A run of 11 helical transmembrane segments spans residues 24–44 (MIPN…ALQV), 48–68 (VLIT…LICM), 79–99 (VFAA…ALIA), 114–134 (IAFI…AYCA), 153–173 (SSLI…FAGT), 176–196 (SIIS…LAYA), 230–250 (ASFI…VVAA), 255–275 (IAVF…LAIG), 295–315 (VLIA…VGLI), 322–342 (IFAL…CDGL), and 372–392 (VILA…ALVL).

Its subcellular location is the cell membrane. Functionally, the actions of the proteins TfxB, TfxD and TfxF are implicated in the processing of the inactive trifolitoxin (TfxA) precursor into the active peptide. This Rhizobium leguminosarum bv. trifolii protein is Trifolitoxin-processing protein TfxD (tfxD).